We begin with the raw amino-acid sequence, 259 residues long: MSNTDNSDKNTKPTGYRPPQTDFNTEFGNNLDYPRLGSVSFRRGTLTDNQESLWDANWPILGKDLTDAEDQRIDVAEWFGRCGHKTILEIGSGTGTSTAAMAPLEADTNIIAVELYKPGLAKLLGAVVRGDISNVRMIRGDGVEVLTRMLPEESLDGVRIYFPDPWPKARHHKRRIIQSGVLNLIASRLKPGGVLHVATDHADYAEWITELVNVEPQLEFMGWPWDECPQLTDRQVITKFEGKGLDKDHTITEFLWRRK.

Over residues 1–11 (MSNTDNSDKNT) the composition is skewed to basic and acidic residues. A disordered region spans residues 1–29 (MSNTDNSDKNTKPTGYRPPQTDFNTEFGN). Residues glutamate 89, glutamate 114, aspartate 141, and aspartate 164 each contribute to the S-adenosyl-L-methionine site. Residue aspartate 164 is part of the active site. Residues lysine 168, aspartate 200, and 238–241 (TKFE) each bind substrate.

It belongs to the class I-like SAM-binding methyltransferase superfamily. TrmB family.

The enzyme catalyses guanosine(46) in tRNA + S-adenosyl-L-methionine = N(7)-methylguanosine(46) in tRNA + S-adenosyl-L-homocysteine. The protein operates within tRNA modification; N(7)-methylguanine-tRNA biosynthesis. Its function is as follows. Catalyzes the formation of N(7)-methylguanine at position 46 (m7G46) in tRNA. The chain is tRNA (guanine-N(7)-)-methyltransferase from Corynebacterium diphtheriae (strain ATCC 700971 / NCTC 13129 / Biotype gravis).